We begin with the raw amino-acid sequence, 456 residues long: Chromosomal replication initiator protein DnaA (456 aa).

The tract at residues 1-79 (MSQEIWADVL…QHPQVSFQVL (79 aa)) is domain I, interacts with DnaA modulators. Residues 79–112 (LPASQDALLLPSDPPPAPISPGRAPAPPPADNRK) are domain II. Positions 89–112 (PSDPPPAPISPGRAPAPPPADNRK) are disordered. Pro residues predominate over residues 90 to 108 (SDPPPAPISPGRAPAPPPA). The domain III, AAA+ region stretch occupies residues 113-329 (TLNPKYTFEN…GALMRVVAFS (217 aa)). The ATP site is built by Gly-157, Gly-159, Lys-160, and Thr-161. The tract at residues 330–456 (SLNNVPFSRA…KGLEDEDSRA (127 aa)) is domain IV, binds dsDNA.

This sequence belongs to the DnaA family. Oligomerizes as a right-handed, spiral filament on DNA at oriC.

It localises to the cytoplasm. Plays an essential role in the initiation and regulation of chromosomal replication. ATP-DnaA binds to the origin of replication (oriC) to initiate formation of the DNA replication initiation complex once per cell cycle. Binds the DnaA box (a 9 base pair repeat at the origin) and separates the double-stranded (ds)DNA. Forms a right-handed helical filament on oriC DNA; dsDNA binds to the exterior of the filament while single-stranded (ss)DNA is stabiized in the filament's interior. The ATP-DnaA-oriC complex binds and stabilizes one strand of the AT-rich DNA unwinding element (DUE), permitting loading of DNA polymerase. After initiation quickly degrades to an ADP-DnaA complex that is not apt for DNA replication. Binds acidic phospholipids. This is Chromosomal replication initiator protein DnaA from Deinococcus deserti (strain DSM 17065 / CIP 109153 / LMG 22923 / VCD115).